We begin with the raw amino-acid sequence, 196 residues long: Carnitine operon protein CaiE (196 aa).

Residues T173–R196 are disordered. Residues Q187–R196 are compositionally biased toward polar residues.

It belongs to the transferase hexapeptide repeat family.

It participates in amine and polyamine metabolism; carnitine metabolism. Functionally, overproduction of CaiE stimulates the activity of CaiB and CaiD. This chain is Carnitine operon protein CaiE, found in Shigella flexneri serotype 5b (strain 8401).